Here is a 272-residue protein sequence, read N- to C-terminus: Undecaprenyl-diphosphatase (272 aa).

The next 8 membrane-spanning stretches (helical) occupy residues 5 to 25 (YSLF…FLPV), 45 to 65 (AKTF…VVFW), 88 to 108 (HLTL…GLAF), 115 to 135 (LFNP…LLAA), 152 to 171 (TYRQ…WPGF), 189 to 209 (YAAS…ASGL), 221 to 241 (GDLP…LIAI), and 251 to 271 (ISFV…YWVF).

Belongs to the UppP family.

Its subcellular location is the cell inner membrane. It catalyses the reaction di-trans,octa-cis-undecaprenyl diphosphate + H2O = di-trans,octa-cis-undecaprenyl phosphate + phosphate + H(+). In terms of biological role, catalyzes the dephosphorylation of undecaprenyl diphosphate (UPP). Confers resistance to bacitracin. This is Undecaprenyl-diphosphatase from Yersinia enterocolitica serotype O:8 / biotype 1B (strain NCTC 13174 / 8081).